The sequence spans 373 residues: MKLSDISAKLGCALEGDGQVDIVGIAGIEEAEAGHLTFLSNPKYKAKLRHTKASAAIVPADFEASAAWPLPLLRHANPYLTFAHAIELFYSPPPAPHGVHPTAVVAPTAVCGHNVRIGASSVIGEGVVLADGVTVYPNCTIYPGVRIGRNSTIHSNCVVREHVVIGEDCIVQNGAVIGADGFGYAKQADGTWYKIVQSGSVVLENRVEIGACTTVDRATIGETRIKSGSKLDNLVMIGHGSSVGENTLLCGQVGLAGSSTVGRNVMLAGQVGVAGHLHIGDNVVATVKSCIWKSVEANQVLYGNIPASDSHTWLKASAVFRQLPHMQKSVQQMQKRIAVLEEPFKTNGKSGQADAPPKVALECHGTTGDAPQG.

H239 serves as the catalytic Proton acceptor. Residues K345–G373 form a disordered region.

The protein belongs to the transferase hexapeptide repeat family. LpxD subfamily. In terms of assembly, homotrimer.

It carries out the reaction a UDP-3-O-[(3R)-3-hydroxyacyl]-alpha-D-glucosamine + a (3R)-hydroxyacyl-[ACP] = a UDP-2-N,3-O-bis[(3R)-3-hydroxyacyl]-alpha-D-glucosamine + holo-[ACP] + H(+). Its pathway is bacterial outer membrane biogenesis; LPS lipid A biosynthesis. Catalyzes the N-acylation of UDP-3-O-acylglucosamine using 3-hydroxyacyl-ACP as the acyl donor. Is involved in the biosynthesis of lipid A, a phosphorylated glycolipid that anchors the lipopolysaccharide to the outer membrane of the cell. In Gloeobacter violaceus (strain ATCC 29082 / PCC 7421), this protein is UDP-3-O-acylglucosamine N-acyltransferase 2.